The following is a 419-amino-acid chain: L-rhamnose isomerase (419 aa).

Residues histidine 262, aspartate 294, and aspartate 296 each contribute to the Mn(2+) site.

It belongs to the rhamnose isomerase family. As to quaternary structure, homotetramer. It depends on Mn(2+) as a cofactor.

The protein resides in the cytoplasm. The enzyme catalyses L-rhamnopyranose = L-rhamnulose. Its pathway is carbohydrate degradation; L-rhamnose degradation; glycerone phosphate from L-rhamnose: step 1/3. In terms of biological role, catalyzes the interconversion of L-rhamnose and L-rhamnulose. In Escherichia coli (strain 55989 / EAEC), this protein is L-rhamnose isomerase.